A 130-amino-acid polypeptide reads, in one-letter code: Phosphoribosyl-AMP cyclohydrolase (130 aa).

Asp-77 contributes to the Mg(2+) binding site. Cys-78 is a Zn(2+) binding site. Residues Asp-79 and Asp-81 each contribute to the Mg(2+) site. 2 residues coordinate Zn(2+): Cys-95 and Cys-102.

Belongs to the PRA-CH family. As to quaternary structure, homodimer. The cofactor is Mg(2+). Zn(2+) is required as a cofactor.

Its subcellular location is the cytoplasm. It catalyses the reaction 1-(5-phospho-beta-D-ribosyl)-5'-AMP + H2O = 1-(5-phospho-beta-D-ribosyl)-5-[(5-phospho-beta-D-ribosylamino)methylideneamino]imidazole-4-carboxamide. The protein operates within amino-acid biosynthesis; L-histidine biosynthesis; L-histidine from 5-phospho-alpha-D-ribose 1-diphosphate: step 3/9. Functionally, catalyzes the hydrolysis of the adenine ring of phosphoribosyl-AMP. This is Phosphoribosyl-AMP cyclohydrolase from Pseudomonas syringae pv. tomato (strain ATCC BAA-871 / DC3000).